A 312-amino-acid chain; its full sequence is Glycine--tRNA ligase alpha subunit (312 aa).

Belongs to the class-II aminoacyl-tRNA synthetase family. As to quaternary structure, tetramer of two alpha and two beta subunits.

The protein resides in the cytoplasm. It catalyses the reaction tRNA(Gly) + glycine + ATP = glycyl-tRNA(Gly) + AMP + diphosphate. The polypeptide is Glycine--tRNA ligase alpha subunit (Nostoc punctiforme (strain ATCC 29133 / PCC 73102)).